A 188-amino-acid polypeptide reads, in one-letter code: GMP synthase [glutamine-hydrolyzing] subunit A (188 aa).

Residues lysine 3–arginine 188 form the Glutamine amidotransferase type-1 domain. Cysteine 79 functions as the Nucleophile in the catalytic mechanism. Catalysis depends on residues histidine 166 and glutamate 168.

In terms of assembly, heterodimer composed of a glutamine amidotransferase subunit (A) and a GMP-binding subunit (B).

The enzyme catalyses XMP + L-glutamine + ATP + H2O = GMP + L-glutamate + AMP + diphosphate + 2 H(+). It functions in the pathway purine metabolism; GMP biosynthesis; GMP from XMP (L-Gln route): step 1/1. Functionally, catalyzes the synthesis of GMP from XMP. In Ignicoccus hospitalis (strain KIN4/I / DSM 18386 / JCM 14125), this protein is GMP synthase [glutamine-hydrolyzing] subunit A.